The primary structure comprises 64 residues: Small ribosomal subunit protein eS17 (64 aa).

Belongs to the eukaryotic ribosomal protein eS17 family.

The sequence is that of Small ribosomal subunit protein eS17 from Methanosarcina acetivorans (strain ATCC 35395 / DSM 2834 / JCM 12185 / C2A).